The primary structure comprises 424 residues: Glutamyl-tRNA reductase (424 aa).

Residues 51–54, Ser99, 104–106, and Gln110 contribute to the substrate site; these read TCNR and EDQ. Residue Cys52 is the Nucleophile of the active site. Position 179-184 (179-184) interacts with NADP(+); the sequence is GGGEMG.

Belongs to the glutamyl-tRNA reductase family. In terms of assembly, homodimer.

It catalyses the reaction (S)-4-amino-5-oxopentanoate + tRNA(Glu) + NADP(+) = L-glutamyl-tRNA(Glu) + NADPH + H(+). The protein operates within porphyrin-containing compound metabolism; protoporphyrin-IX biosynthesis; 5-aminolevulinate from L-glutamyl-tRNA(Glu): step 1/2. Catalyzes the NADPH-dependent reduction of glutamyl-tRNA(Glu) to glutamate 1-semialdehyde (GSA). The protein is Glutamyl-tRNA reductase of Methanocorpusculum labreanum (strain ATCC 43576 / DSM 4855 / Z).